A 122-amino-acid polypeptide reads, in one-letter code: Large ribosomal subunit protein uL14 (122 aa).

This sequence belongs to the universal ribosomal protein uL14 family. As to quaternary structure, part of the 50S ribosomal subunit. Forms a cluster with proteins L3 and L19. In the 70S ribosome, L14 and L19 interact and together make contacts with the 16S rRNA in bridges B5 and B8.

Functionally, binds to 23S rRNA. Forms part of two intersubunit bridges in the 70S ribosome. The sequence is that of Large ribosomal subunit protein uL14 from Alcanivorax borkumensis (strain ATCC 700651 / DSM 11573 / NCIMB 13689 / SK2).